The following is a 124-amino-acid chain: Small ribosomal subunit protein uS12 (124 aa).

The residue at position 89 (Asp-89) is a 3-methylthioaspartic acid.

This sequence belongs to the universal ribosomal protein uS12 family. Part of the 30S ribosomal subunit. Contacts proteins S8 and S17. May interact with IF1 in the 30S initiation complex.

With S4 and S5 plays an important role in translational accuracy. Functionally, interacts with and stabilizes bases of the 16S rRNA that are involved in tRNA selection in the A site and with the mRNA backbone. Located at the interface of the 30S and 50S subunits, it traverses the body of the 30S subunit contacting proteins on the other side and probably holding the rRNA structure together. The combined cluster of proteins S8, S12 and S17 appears to hold together the shoulder and platform of the 30S subunit. This is Small ribosomal subunit protein uS12 from Aliivibrio salmonicida (strain LFI1238) (Vibrio salmonicida (strain LFI1238)).